A 307-amino-acid polypeptide reads, in one-letter code: Quinolinate synthase (307 aa).

Histidine 23 and serine 40 together coordinate iminosuccinate. Cysteine 86 provides a ligand contact to [4Fe-4S] cluster. Residues 112 to 114 (YVN) and serine 129 each bind iminosuccinate. Cysteine 173 lines the [4Fe-4S] cluster pocket. Iminosuccinate is bound by residues 199–201 (HPE) and threonine 216. Cysteine 265 serves as a coordination point for [4Fe-4S] cluster.

Belongs to the quinolinate synthase family. Type 2 subfamily. It depends on [4Fe-4S] cluster as a cofactor.

Its subcellular location is the cytoplasm. The catalysed reaction is iminosuccinate + dihydroxyacetone phosphate = quinolinate + phosphate + 2 H2O + H(+). Its pathway is cofactor biosynthesis; NAD(+) biosynthesis; quinolinate from iminoaspartate: step 1/1. In terms of biological role, catalyzes the condensation of iminoaspartate with dihydroxyacetone phosphate to form quinolinate. The protein is Quinolinate synthase of Methanocaldococcus jannaschii (strain ATCC 43067 / DSM 2661 / JAL-1 / JCM 10045 / NBRC 100440) (Methanococcus jannaschii).